The sequence spans 1296 residues: MDSLDHMLTDPLELGPCGDGHSTGIMEDCLLGGTRVSLPEDLLEDPEIFFDVVSLSTWQEVLSDSQREHLQQFLPRFPADSVEQQRELILALFSGENFRFGNPLHIAQKLFRDGHFNPEVVKYRQLCFKSQYKRYLNSQQQYFHRLLKQILASRSDLLEMARRSGPALPFPHKHHSPSRSPEEREWRTQQRYLKVLREVKEECGDTALSSDEEDLSSWLPSSPARSPSPAVPLRVVPTLSTTDMKTADKIELGDSDLKLMLKKHHEKRKHQPDHPDLLTGDLTLSDIMTRVNAGRKGSLAALYDLAVLKKKVKEKEEKKKKKIKLIKSEAEDLAEPLSSTEGVPTLSQAPSPLAISSIKEEPLEDIKPCLGINEISSSFFSLLLEILLLESQASLPMLEDRVLDWQSSPASSLNSWFSAAPNWAELVLPALQYLAGESRAVPSSFSPFVEFKEKTQQWKLLGQSQDNEKELAALFHLWLETKDQAFCKENEDSSDAMTPVPRVRTDYVVRPSTGEEKRVFQEQERYRYSQPHKAFTFRMHGFESVVGPVKGVFDKETSLNKAREHSLLRSDRPAYVTILSLVRDAAARLPNGEGTRAEICELLKDSQFLAPDVTSTQVNTVVSGALDRLHYEKDPCVKYDIGRKLWIYLHRDRSEEEFERIHQAQAAAAKARKALQQKPKPPSKVKSSNKEGSTKGLSGPSEQSQMSLSDSSMPPTPVTPVTPTTPALPTPISPPPVSAVNRSGSSTVSEPAQSSSGVLLVSSPTMPQLGTMLSPASIQTPPSSQATARVVSHSSSAGLPQVRVVAQPSLPAVSQQSVGPAQPLPQMPAGPQIRVPVTATQTKVVPQAVMATVPVKGQTAAASVQRPGPGQTGLTVTNLPAAVSPVSKTAMSSPGNSAPSASTTAVIQNVTGQNIIKQVSITGQLGVKPQTGSSIPLTATNFRIQGKDVLRLPPSSITTDAKGQTVLRITPDMMATLAKSQVTTVKLTQDLFGAGSGTAGKGISATLHVTSNPVHAADSPAKAPSASVPSSAPAGTTVVKVTPDLKPTETANSAFRLMPALGVSVADQKGKNTVASSEAKPAATIRIVQGLGVMPPKAGQTITVAAHAKQGASVAGGSGTVHSSTVSLPSINAAVSKTVAVASGATSTPISIGTGAPTVRQVPVNTTVVSTSQSGKLPTRITVPLSVISQPMKGKSVVTAPIIKGNLGANLSGLGRNIILTTMPAGTKLIAGNKPVSFLTAQQLQQLQQQGQATQVRIQTVPASHLQQGTASGSSKAVSTVVVTTAPSPKQAPEQQ.

Residues 39-156 (PEDLLEDPEI…LKQILASRSD (118 aa)) form the DEUBAD domain. 2 disordered regions span residues 165-186 (GPAL…EREW) and 204-232 (GDTA…PAVP). Residues 216–232 (SSWLPSSPARSPSPAVP) show a composition bias toward low complexity. Phosphoserine occurs at positions 228 and 298. Lysine 327 is covalently cross-linked (Glycyl lysine isopeptide (Lys-Gly) (interchain with G-Cter in SUMO2)). A Phosphoserine modification is found at serine 351. The interval 370 to 495 (LGINEISSSF…FCKENEDSSD (126 aa)) is winged-helix like domain. Lysine 469 participates in a covalent cross-link: Glycyl lysine isopeptide (Lys-Gly) (interchain with G-Cter in SUMO2). A Glycyl lysine isopeptide (Lys-Gly) (interchain with G-Cter in SUMO1); alternate cross-link involves residue lysine 488. Lysine 488 participates in a covalent cross-link: Glycyl lysine isopeptide (Lys-Gly) (interchain with G-Cter in SUMO2); alternate. Disordered regions lie at residues 663 to 758 (QAQA…SSGV) and 1015 to 1036 (HAAD…PAGT). The span at 700-713 (PSEQSQMSLSDSSM) shows a compositional bias: low complexity. The segment covering 726–737 (PALPTPISPPPV) has biased composition (pro residues). The span at 741–758 (NRSGSSTVSEPAQSSSGV) shows a compositional bias: polar residues. A compositionally biased stretch (low complexity) spans 1016 to 1034 (AADSPAKAPSASVPSSAPA). At serine 1019 the chain carries Phosphoserine. Residue lysine 1234 is modified to N6-acetyllysine. The residue at position 1288 (serine 1288) is a Phosphoserine.

It belongs to the NFRKB family. As to quaternary structure, component of the chromatin remodeling INO80 complex; specifically part of a complex module associated with the N-terminus of INO80. Interacts with UCHL5.

It is found in the nucleus. In terms of biological role, binds to the DNA consensus sequence 5'-GGGGAATCTCC-3'. Functionally, putative regulatory component of the chromatin remodeling INO80 complex which is involved in transcriptional regulation, DNA replication and probably DNA repair. Modulates the deubiquitinase activity of UCHL5 in the INO80 complex. This Mus musculus (Mouse) protein is Nuclear factor related to kappa-B-binding protein (Nfrkb).